A 1373-amino-acid polypeptide reads, in one-letter code: Capping protein, Arp2/3 and myosin-I linker protein 3 (1373 aa).

Residues 126–151 (RGNADTPEGPRDTSPNSETSTSTTHS) are disordered. A compositionally biased stretch (low complexity) spans 138 to 151 (TSPNSETSTSTTHS). 10 LRR repeats span residues 242 to 269 (SGSLEELVLDNAGLKTDFVQKLAGVFGE), 272 to 299 (SCVLHALTLSHNPIEDKGFLSLSQQLLC), 333 to 358 (ASSLRYLDLSKNPGLLATDEANALYS), 390 to 417 (CSHLTYLNLARNSCSHRKGREAPPAFKQ), 422 to 446 (AYTLSHVNLSATRLPLEALRALLQG), 453 to 475 (LSDLHLDLSSCELRSAGAQALQE), 480 to 507 (VTCIGSLDLSDNGFDSDLLTLVPALGKN), 510 to 536 (LKHLFLGKNFNVKAKTLEEILHKLVQL), 541 to 564 (DCSLQSLSVADSRLKLRTSILINA), and 568 to 591 (NTCLAKVDLSGNGMEDIGAKMLSK). 2 disordered regions span residues 864-902 (RTLSDPPGGAGPGQDPSSRGRGRSHDHEETDDELGTNID) and 970-1373 (LRHQ…PGTD). Over residues 981–997 (PRTTPPGPGRPSVPVPG) the composition is skewed to pro residues. Residues 1007–1022 (RLDEGLEDFFSRRVMD) show a composition bias toward basic and acidic residues. Residues 1047-1062 (QKRRRRGLFHFRRPRS) show a composition bias toward basic residues. Residues 1078–1097 (LPPPPPPPPTQESPPSPDPP) show a composition bias toward pro residues. Over residues 1098–1108 (SLGNNSSPCWS) the composition is skewed to low complexity. Positions 1218 to 1228 (RRAEATWHIAE) are enriched in basic and acidic residues. The span at 1232–1243 (PNHSCQSPSPAS) shows a compositional bias: polar residues. The span at 1269 to 1278 (PIGPRPPKPV) shows a compositional bias: pro residues. Residues 1345 to 1358 (QSCDKLEPDRRRPP) are compositionally biased toward basic and acidic residues.

Belongs to the CARMIL family. In terms of tissue distribution, widely expressed, with much higher levels in fetal tissues than in adult ones. Highly expressed in newborn brain.

It is found in the cytoplasm. It localises to the cell membrane. The polypeptide is Capping protein, Arp2/3 and myosin-I linker protein 3 (Carmil3) (Rattus norvegicus (Rat)).